Here is a 365-residue protein sequence, read N- to C-terminus: S-adenosylmethionine:tRNA ribosyltransferase-isomerase (365 aa).

The protein belongs to the QueA family. In terms of assembly, monomer.

The protein resides in the cytoplasm. The catalysed reaction is 7-aminomethyl-7-carbaguanosine(34) in tRNA + S-adenosyl-L-methionine = epoxyqueuosine(34) in tRNA + adenine + L-methionine + 2 H(+). It functions in the pathway tRNA modification; tRNA-queuosine biosynthesis. In terms of biological role, transfers and isomerizes the ribose moiety from AdoMet to the 7-aminomethyl group of 7-deazaguanine (preQ1-tRNA) to give epoxyqueuosine (oQ-tRNA). In Rickettsia rickettsii (strain Iowa), this protein is S-adenosylmethionine:tRNA ribosyltransferase-isomerase.